Here is a 428-residue protein sequence, read N- to C-terminus: Lupus La protein homolog A (428 aa).

Residues 7 to 99 (KEQKLDSDTK…RRSPAKPLPE (93 aa)) enclose the HTH La-type RNA-binding domain. Positions 111–203 (KSVYIKGFPT…EERKLNKSEE (93 aa)) constitute an RRM domain. 2 disordered regions span residues 187–223 (EYHAKKNEERKLNKSEEKAKSKQVKKEAQKQAEDAER) and 323–428 (QESF…VGDQ). 2 short sequence motifs (nuclear localization signal) span residues 196 to 212 (RKLNKSEEKAKSKQVKK) and 316 to 332 (KKILEGKQESFNKRKGR). The xRRM domain maps to 227–349 (EERVGSLLKF…KGRGGKGNDS (123 aa)). Basic residues-rich tracts occupy residues 328–343 (KRKGRDGRKFKGKGRG) and 352–361 (RKRTQFQGKK). The segment covering 366–377 (SSDDEDDMEESE) has biased composition (acidic residues). The span at 406-428 (RSLDDKAEDGPAVKQSKTEVGDQ) shows a compositional bias: basic and acidic residues.

Post-translationally, phosphorylated.

The protein localises to the nucleus. Its function is as follows. La protein plays a role in the transcription of RNA polymerase III. It is most probably a transcription termination factor. Binds to the 3' termini of virtually all nascent polymerase III transcripts. The chain is Lupus La protein homolog A (ssb-a) from Xenopus laevis (African clawed frog).